The chain runs to 641 residues: Chaperone protein HtpG (641 aa).

An a; substrate-binding region spans residues 1–351 (MTQSVHAETH…SNDLPLNVSR (351 aa)). The b stretch occupies residues 352-568 (EILQDNKVTV…AHGMSTQMIK (217 aa)). A c region spans residues 569 to 641 (LMRAAGQPVP…SRINRLLLQA (73 aa)).

This sequence belongs to the heat shock protein 90 family. Homodimer.

Its subcellular location is the cytoplasm. Its function is as follows. Molecular chaperone. Has ATPase activity. The chain is Chaperone protein HtpG from Aeromonas hydrophila subsp. hydrophila (strain ATCC 7966 / DSM 30187 / BCRC 13018 / CCUG 14551 / JCM 1027 / KCTC 2358 / NCIMB 9240 / NCTC 8049).